Consider the following 224-residue polypeptide: tRNA (guanine-N(7)-)-methyltransferase (224 aa).

4 residues coordinate S-adenosyl-L-methionine: Glu45, Glu70, Asp97, and Asp119. Asp119 is a catalytic residue. Residues Lys123, Asp155, and Thr199–Glu202 each bind substrate.

This sequence belongs to the class I-like SAM-binding methyltransferase superfamily. TrmB family.

It carries out the reaction guanosine(46) in tRNA + S-adenosyl-L-methionine = N(7)-methylguanosine(46) in tRNA + S-adenosyl-L-homocysteine. Its pathway is tRNA modification; N(7)-methylguanine-tRNA biosynthesis. Its function is as follows. Catalyzes the formation of N(7)-methylguanine at position 46 (m7G46) in tRNA. The sequence is that of tRNA (guanine-N(7)-)-methyltransferase from Ureaplasma parvum serovar 3 (strain ATCC 27815 / 27 / NCTC 11736).